Reading from the N-terminus, the 381-residue chain is Dihydroorotate dehydrogenase (quinone) (381 aa).

FMN contacts are provided by residues 74–78 (AGFDK) and T98. Position 78 (K78) interacts with substrate. Substrate is bound at residue 123–127 (NRMGF). N152 and N185 together coordinate FMN. N185 serves as a coordination point for substrate. S188 acts as the Nucleophile in catalysis. Residue N190 participates in substrate binding. The FMN site is built by K223 and T251. Residue 252–253 (NT) coordinates substrate. FMN contacts are provided by residues G289, G318, and 339–340 (YT). Residues 359–381 (RSSPPSPDVTLPPENTPVGQIQA) are disordered.

It belongs to the dihydroorotate dehydrogenase family. Type 2 subfamily. In terms of assembly, monomer. FMN serves as cofactor.

Its subcellular location is the cell membrane. The catalysed reaction is (S)-dihydroorotate + a quinone = orotate + a quinol. Its pathway is pyrimidine metabolism; UMP biosynthesis via de novo pathway; orotate from (S)-dihydroorotate (quinone route): step 1/1. Functionally, catalyzes the conversion of dihydroorotate to orotate with quinone as electron acceptor. In Synechococcus sp. (strain JA-2-3B'a(2-13)) (Cyanobacteria bacterium Yellowstone B-Prime), this protein is Dihydroorotate dehydrogenase (quinone).